Here is a 277-residue protein sequence, read N- to C-terminus: Large ribosomal subunit protein uL2 (277 aa).

A disordered region spans residues 222–277; that stretch reads GVAMNPVDHPHGGGEGRTSGGRHPVSPWGKPTKGKRTRSNKATDKFIMRTRHQRKK.

This sequence belongs to the universal ribosomal protein uL2 family. In terms of assembly, part of the 50S ribosomal subunit. Forms a bridge to the 30S subunit in the 70S ribosome.

One of the primary rRNA binding proteins. Required for association of the 30S and 50S subunits to form the 70S ribosome, for tRNA binding and peptide bond formation. It has been suggested to have peptidyltransferase activity; this is somewhat controversial. Makes several contacts with the 16S rRNA in the 70S ribosome. The chain is Large ribosomal subunit protein uL2 from Bartonella henselae (strain ATCC 49882 / DSM 28221 / CCUG 30454 / Houston 1) (Rochalimaea henselae).